The primary structure comprises 269 residues: Putative esterase/lipase 1 (269 aa).

Residue histidine 27 is part of the active site. Serine 94 acts as the Charge relay system in catalysis.

It belongs to the lipase/esterase LIP3/BchO family.

The protein is Putative esterase/lipase 1 of Mycoplasma pneumoniae (strain ATCC 29342 / M129 / Subtype 1) (Mycoplasmoides pneumoniae).